We begin with the raw amino-acid sequence, 574 residues long: Ankyrin repeat protein B19 (574 aa).

ANK repeat units lie at residues 56–87 (TGYT…DVTM), 135–164 (IKSR…DPNF), 167–213 (DGYT…NLNA), 217–249 (CGNT…NFEI), 253–285 (HGLT…NVGE), and 327–356 (EGKT…DINA). An F-box domain is found at 541–574 (NCLLTLLPSEIIYEILYMLTINDLYNISYPPTKV).

It belongs to the poxvirinae B18 protein family.

The chain is Ankyrin repeat protein B19 from Vaccinia virus (strain Western Reserve) (VACV).